The primary structure comprises 520 residues: Major capsid protein (520 aa).

It belongs to the NCLDV major capsid protein family.

It is found in the virion. Functionally, major capsid protein that self assembles to form an icosahedral capsid with a T=219 symmetry. The polypeptide is Major capsid protein (MCP) (Phaeocystis pouchetii (PpV01)).